The sequence spans 456 residues: Bestrophin homolog 18 (456 aa).

Helical transmembrane passes span 29–49 (WSAI…VSAI), 83–103 (GFFI…IGFI), 234–254 (IIYP…GILA), and 267–287 (MIDL…MGWL). The disordered stretch occupies residues 416 to 456 (ASSSRSLERQRSPGSFRMETLTPGSPTNTPIEPIDKIDKKK).

The protein belongs to the anion channel-forming bestrophin (TC 1.A.46) family. Calcium-sensitive chloride channel subfamily. In terms of assembly, forms oligomers.

The protein localises to the cell membrane. Forms chloride channels. The chain is Bestrophin homolog 18 (best-18) from Caenorhabditis elegans.